The sequence spans 133 residues: MGMTSDTIADLLTRIRNALKAEHLYVDLEHSKMREAIVKILKQHGFLAHYLIKEEHRKRTMRIFLQYTNDRKPVIRQLKRVSKPSRRVYVPAAKIPYVFGNMGISVLSTSQGVLDGSTARAKNIGGELLCLVW.

This sequence belongs to the universal ribosomal protein uS8 family. As to quaternary structure, part of the 30S ribosomal subunit. Contacts proteins S5 and S12.

In terms of biological role, one of the primary rRNA binding proteins, it binds directly to 16S rRNA central domain where it helps coordinate assembly of the platform of the 30S subunit. The chain is Small ribosomal subunit protein uS8 from Chlamydia abortus (strain DSM 27085 / S26/3) (Chlamydophila abortus).